We begin with the raw amino-acid sequence, 176 residues long: Lipoprotein signal peptidase (176 aa).

4 helical membrane-spanning segments follow: residues 26-46, 57-77, 82-102, and 111-131; these read LWLAFALLVVLLDQFFKIVIV, VTGFFNLVLVYNKGAAFSFLA, WQRWFFTGLGVVVGAFIVWLL, and FCFAVSLILGGAVGNVVDRVI. Catalysis depends on residues aspartate 137 and aspartate 155. The chain crosses the membrane as a helical span at residues 147–167; the sequence is HWPAFNVADCAITVGAVLLIV.

This sequence belongs to the peptidase A8 family.

It is found in the cell inner membrane. It carries out the reaction Release of signal peptides from bacterial membrane prolipoproteins. Hydrolyzes -Xaa-Yaa-Zaa-|-(S,diacylglyceryl)Cys-, in which Xaa is hydrophobic (preferably Leu), and Yaa (Ala or Ser) and Zaa (Gly or Ala) have small, neutral side chains.. Its pathway is protein modification; lipoprotein biosynthesis (signal peptide cleavage). Its function is as follows. This protein specifically catalyzes the removal of signal peptides from prolipoproteins. In Cupriavidus taiwanensis (strain DSM 17343 / BCRC 17206 / CCUG 44338 / CIP 107171 / LMG 19424 / R1) (Ralstonia taiwanensis (strain LMG 19424)), this protein is Lipoprotein signal peptidase.